A 97-amino-acid chain; its full sequence is Eclosion hormone (97 aa).

The N-terminal stretch at 1-17 (MNCKPLILCTFVAVAMC) is a signal peptide. Intrachain disulfides connect C48/C72, C52/C68, and C55/C83.

Belongs to the insect eclosion hormone family. In terms of tissue distribution, expressed in a single pair of brain neurons which extend their processes the entire length of the central nervous system and also to the corpora cardiaca portion of the ring gland. These cells show massive depletion of immunoreactive Eh at ecdysis.

It localises to the secreted. Neuropeptide that triggers the performance of ecdysis behaviors at the end of a molt. It triggers adult behavior patterns: larval, pupal and adult ecdysis, and plasticization during the molt. The protein is Eclosion hormone (Eh) of Drosophila melanogaster (Fruit fly).